A 192-amino-acid chain; its full sequence is 7-methyl-GTP pyrophosphatase (192 aa).

Residue D69 is the Proton acceptor of the active site.

The protein belongs to the Maf family. YceF subfamily. A divalent metal cation is required as a cofactor.

The protein localises to the cytoplasm. It carries out the reaction N(7)-methyl-GTP + H2O = N(7)-methyl-GMP + diphosphate + H(+). Nucleoside triphosphate pyrophosphatase that hydrolyzes 7-methyl-GTP (m(7)GTP). May have a dual role in cell division arrest and in preventing the incorporation of modified nucleotides into cellular nucleic acids. The polypeptide is 7-methyl-GTP pyrophosphatase (Pseudomonas savastanoi pv. phaseolicola (strain 1448A / Race 6) (Pseudomonas syringae pv. phaseolicola (strain 1448A / Race 6))).